A 33-amino-acid polypeptide reads, in one-letter code: uncharacterized protein (33 aa).

This sequence to E.coli ylcH.

This is an uncharacterized protein from Enterobacteria phage 82 (Bacteriophage 82).